A 208-amino-acid polypeptide reads, in one-letter code: Guanylate kinase (208 aa).

One can recognise a Guanylate kinase-like domain in the interval 8 to 187; it reads GVCLVISAPS…AISQARSVLT (180 aa). 15-22 is a binding site for ATP; sequence APSGAGKS.

The protein belongs to the guanylate kinase family.

The protein resides in the cytoplasm. The catalysed reaction is GMP + ATP = GDP + ADP. Functionally, essential for recycling GMP and indirectly, cGMP. In Gluconobacter oxydans (strain 621H) (Gluconobacter suboxydans), this protein is Guanylate kinase.